The sequence spans 229 residues: 2-C-methyl-D-erythritol 4-phosphate cytidylyltransferase (229 aa).

It belongs to the IspD/TarI cytidylyltransferase family. IspD subfamily.

The enzyme catalyses 2-C-methyl-D-erythritol 4-phosphate + CTP + H(+) = 4-CDP-2-C-methyl-D-erythritol + diphosphate. It functions in the pathway isoprenoid biosynthesis; isopentenyl diphosphate biosynthesis via DXP pathway; isopentenyl diphosphate from 1-deoxy-D-xylulose 5-phosphate: step 2/6. Its function is as follows. Catalyzes the formation of 4-diphosphocytidyl-2-C-methyl-D-erythritol from CTP and 2-C-methyl-D-erythritol 4-phosphate (MEP). This Clostridium botulinum (strain ATCC 19397 / Type A) protein is 2-C-methyl-D-erythritol 4-phosphate cytidylyltransferase.